Here is a 159-residue protein sequence, read N- to C-terminus: Ribosome maturation factor RimP (159 aa).

This sequence belongs to the RimP family.

The protein resides in the cytoplasm. Required for maturation of 30S ribosomal subunits. This Streptococcus pneumoniae (strain 70585) protein is Ribosome maturation factor RimP.